The sequence spans 274 residues: MQQLQNVIETAFERRADITPANVDTVTREAITHVIDLLDTGALRVAEKIDGQWVTHQWLKKAVLLSFRINDNQVMEGAETRYYDKVPMKFAGYDEARFQHEGFRVVPPATVRKGAFIARNTVLMPSYVNIGAFVDEGTMVDTWATVGSCAQIGKNVHLSGGVGIGGVLEPLQANPTIIEDNCFVGARSEVVEGVIVEEGSVISMGVFIGQSTRIYDRETGEVHYGRVPAGSVVVSGNLPSKDGSYSLYCAVIVKKVDAKTRSKVGINELLRTID.

This sequence belongs to the transferase hexapeptide repeat family.

It localises to the cytoplasm. The enzyme catalyses (S)-2,3,4,5-tetrahydrodipicolinate + succinyl-CoA + H2O = (S)-2-succinylamino-6-oxoheptanedioate + CoA. Its pathway is amino-acid biosynthesis; L-lysine biosynthesis via DAP pathway; LL-2,6-diaminopimelate from (S)-tetrahydrodipicolinate (succinylase route): step 1/3. In Yersinia pseudotuberculosis serotype IB (strain PB1/+), this protein is 2,3,4,5-tetrahydropyridine-2,6-dicarboxylate N-succinyltransferase.